We begin with the raw amino-acid sequence, 670 residues long: Probable potassium transport system protein Kup (670 aa).

Residues 1–42 (MSQIPSPNDPPPAGAVPTSGAPAGPSATPAPSPTAGFSLPEH) are disordered. Over residues 15-35 (AVPTSGAPAGPSATPAPSPTA) the composition is skewed to low complexity. 12 consecutive transmembrane segments (helical) span residues 51 to 71 (LAAL…TSPL), 91 to 111 (VLGV…FKYM), 144 to 164 (VLLM…IITP), 180 to 200 (PAME…LFLF), 208 to 228 (VGAV…VLGV), 254 to 274 (GWHG…GEAL), 290 to 310 (WLGL…ALLL), 322 to 342 (LLAP…AAIV), 380 to 400 (IYLP…VLGF), 406 to 426 (LASA…LLFH), 440 to 460 (AWPL…ANVV), and 464 to 484 (DGGW…STWK).

The protein belongs to the HAK/KUP transporter (TC 2.A.72) family.

The protein resides in the cell inner membrane. The catalysed reaction is K(+)(in) + H(+)(in) = K(+)(out) + H(+)(out). Transport of potassium into the cell. Likely operates as a K(+):H(+) symporter. The chain is Probable potassium transport system protein Kup from Anaeromyxobacter dehalogenans (strain 2CP-C).